A 1052-amino-acid chain; its full sequence is Swarming motility protein SwrC (1052 aa).

Belongs to the resistance-nodulation-cell division (RND) (TC 2.A.6) family.

Functionally, required for self-resistance to surfactin, an antimicrobial lipopeptide surfactant produced by B.subtilis. Also required for swarming motility. The sequence is that of Swarming motility protein SwrC (swrC) from Bacillus subtilis (strain 168).